We begin with the raw amino-acid sequence, 348 residues long: Dihydroorotase (348 aa).

H17 and H19 together coordinate Zn(2+). Residues 19 to 21 (HLR) and N45 contribute to the substrate site. The Zn(2+) site is built by K103, H140, and H178. K103 carries the N6-carboxylysine modification. Substrate is bound at residue H140. Position 223 (L223) interacts with substrate. Position 251 (D251) interacts with Zn(2+). The active site involves D251. Residues H255 and A267 each contribute to the substrate site.

This sequence belongs to the metallo-dependent hydrolases superfamily. DHOase family. Class II DHOase subfamily. In terms of assembly, homodimer. Zn(2+) is required as a cofactor.

It carries out the reaction (S)-dihydroorotate + H2O = N-carbamoyl-L-aspartate + H(+). The protein operates within pyrimidine metabolism; UMP biosynthesis via de novo pathway; (S)-dihydroorotate from bicarbonate: step 3/3. Functionally, catalyzes the reversible cyclization of carbamoyl aspartate to dihydroorotate. The polypeptide is Dihydroorotase (Shigella boydii serotype 18 (strain CDC 3083-94 / BS512)).